Reading from the N-terminus, the 456-residue chain is F-box/FBD/LRR-repeat protein At3g52680 (456 aa).

One can recognise an F-box domain in the interval 20–73 (KDRISELPDGLLLKILSSLPTNIVVATSVLSKQWRSLWKLVPNLEFDSDDYESE). LRR repeat units follow at residues 74-100 (HYTF…RLKF), 102-127 (NFNP…VLDF), 152-179 (TLKL…HLEF), 180-205 (VRYK…RLYR), 225-252 (TIHD…LIEE), 270-295 (IAEV…LLNL), and 318-344 (TREA…KLTD). Positions 358 to 409 (KWNEPKDVPECLLSQLETFVWRRFDWGREEEKEIATYILKNGRRLKKATFST) constitute an FBD domain.

The chain is F-box/FBD/LRR-repeat protein At3g52680 from Arabidopsis thaliana (Mouse-ear cress).